Here is a 191-residue protein sequence, read N- to C-terminus: Large ribosomal subunit protein uL5 (191 aa).

Belongs to the universal ribosomal protein uL5 family. Part of the 50S ribosomal subunit; part of the 5S rRNA/L5/L18/L25 subcomplex. Contacts the 5S rRNA and the P site tRNA. Forms a bridge to the 30S subunit in the 70S ribosome.

Functionally, this is one of the proteins that bind and probably mediate the attachment of the 5S RNA into the large ribosomal subunit, where it forms part of the central protuberance. In the 70S ribosome it contacts protein S13 of the 30S subunit (bridge B1b), connecting the 2 subunits; this bridge is implicated in subunit movement. Contacts the P site tRNA; the 5S rRNA and some of its associated proteins might help stabilize positioning of ribosome-bound tRNAs. The chain is Large ribosomal subunit protein uL5 from Corynebacterium glutamicum (strain R).